A 142-amino-acid chain; its full sequence is HTH-type transcriptional regulator MntR (142 aa).

Residues 1–63 (MTTPSMEDYI…YEKYRGLVLT (63 aa)) form the HTH dtxR-type domain. Residues Asp8, Glu11, His77, Glu99, Glu102, and His103 each coordinate Cd(2+). Residues Asp8, Glu11, His77, Glu99, Glu102, and His103 each coordinate Mn(2+).

This sequence belongs to the DtxR/MntR family. Homodimer.

The protein resides in the cytoplasm. DNA binding is strongly activated by Mn(2+) and Cd(2+), but it is poorly activated by non-cognate metal cations, including Co(2+), Fe(2+), Ni(2+), Ca(2+) and Zn(2+). In the strict absence of divalent transition metal ions, MntR has a low affinity for DNA. Functionally, central regulator of manganese homeostasis that regulates the expression of both manganese uptake and efflux systems. In the presence of high levels of manganese, it mediates repression of the manganese uptake systems MntH and MntABCD and activation of the efflux systems MneP and MneS. Binds with high affinity to the regulatory regions of its target genes. The manganese concentration required for activation of efflux is higher than that for repression of uptake. The polypeptide is HTH-type transcriptional regulator MntR (Bacillus subtilis (strain 168)).